Consider the following 377-residue polypeptide: Chaperone protein DnaJ (377 aa).

Positions 5–70 (DYYEVLGVSR…DKKAAYDQFG (66 aa)) constitute a J domain. A CR-type zinc finger spans residues 133–211 (GLTKELRIPT…CHGDGRVEKS (79 aa)). Residues Cys146, Cys149, Cys163, Cys166, Cys185, Cys188, Cys199, and Cys202 each contribute to the Zn(2+) site. CXXCXGXG motif repeat units follow at residues 146 to 153 (CDLCEGSG), 163 to 170 (CGTCHGQG), 185 to 192 (CPTCHGRG), and 199 to 206 (CTKCHGDG).

This sequence belongs to the DnaJ family. Homodimer. The cofactor is Zn(2+).

It is found in the cytoplasm. Functionally, participates actively in the response to hyperosmotic and heat shock by preventing the aggregation of stress-denatured proteins and by disaggregating proteins, also in an autonomous, DnaK-independent fashion. Unfolded proteins bind initially to DnaJ; upon interaction with the DnaJ-bound protein, DnaK hydrolyzes its bound ATP, resulting in the formation of a stable complex. GrpE releases ADP from DnaK; ATP binding to DnaK triggers the release of the substrate protein, thus completing the reaction cycle. Several rounds of ATP-dependent interactions between DnaJ, DnaK and GrpE are required for fully efficient folding. Also involved, together with DnaK and GrpE, in the DNA replication of plasmids through activation of initiation proteins. The sequence is that of Chaperone protein DnaJ from Shewanella baltica (strain OS223).